A 356-amino-acid polypeptide reads, in one-letter code: Chorismate synthase (356 aa).

Positions 48 and 54 each coordinate NADP(+). FMN contacts are provided by residues 125-127 (RSS), 237-238 (NA), Gly-281, 296-300 (KPTSS), and Arg-322.

Belongs to the chorismate synthase family. In terms of assembly, homotetramer. The cofactor is FMNH2.

It catalyses the reaction 5-O-(1-carboxyvinyl)-3-phosphoshikimate = chorismate + phosphate. It functions in the pathway metabolic intermediate biosynthesis; chorismate biosynthesis; chorismate from D-erythrose 4-phosphate and phosphoenolpyruvate: step 7/7. Functionally, catalyzes the anti-1,4-elimination of the C-3 phosphate and the C-6 proR hydrogen from 5-enolpyruvylshikimate-3-phosphate (EPSP) to yield chorismate, which is the branch point compound that serves as the starting substrate for the three terminal pathways of aromatic amino acid biosynthesis. This reaction introduces a second double bond into the aromatic ring system. The sequence is that of Chorismate synthase from Novosphingobium aromaticivorans (strain ATCC 700278 / DSM 12444 / CCUG 56034 / CIP 105152 / NBRC 16084 / F199).